We begin with the raw amino-acid sequence, 160 residues long: Protein shisa-like-2B (160 aa).

The helical transmembrane segment at 65-85 (IGALIGLGIAALVLLAFVISV) threads the bilayer.

The protein belongs to the shisa family.

It is found in the membrane. In Homo sapiens (Human), this protein is Protein shisa-like-2B.